Here is a 447-residue protein sequence, read N- to C-terminus: Gastrin/cholecystokinin type B receptor (447 aa).

The Extracellular segment spans residues 1–57 (MELLKLNRSVQGTGPGPGASLCRPGAPLLNSSSVGNLSCEPPRIRGAGTRELELAIR). Residues Asn7, Asn30, and Asn36 are each glycosylated (N-linked (GlcNAc...) asparagine). The chain crosses the membrane as a helical span at residues 58–79 (ITLYAVIFLMSVGGNMLIIVVL). Residues 80 to 87 (GLSRRLRT) are Cytoplasmic-facing. The helical transmembrane segment at 88-109 (VTNAFLLSLAVSDLLLAVACMP) threads the bilayer. The Extracellular portion of the chain corresponds to 110 to 131 (FTLLPNLMGTFIFGTVICKAVS). A disulfide bond links Cys127 and Cys205. A helical transmembrane segment spans residues 132 to 150 (YLMGVSVSVSTLSLVAIAL). The Cytoplasmic portion of the chain corresponds to 151 to 170 (ERYSAICRPLQARVWQTRSH). A helical membrane pass occupies residues 171–189 (AARVIVATWLLSGLLMVPY). Over 190-219 (PVYTVVQPVGPRVLQCVHRWPSARVRQTWS) the chain is Extracellular. Residues 220 to 242 (VLLLLLLFFIPGVVMAVAYGLIS) form a helical membrane-spanning segment. Residues 243-333 (RELYLGLRFD…KLLAKKRVVR (91 aa)) lie on the Cytoplasmic side of the membrane. The interval 258–285 (DSQSRVRNQGGLPGAVHQNGRCRPETGA) is disordered. The helical transmembrane segment at 334–355 (MLLVIVVLFFLCWLPVYSANTW) threads the bilayer. At 356 to 373 (RAFDGPGAHRALSGAPIS) the chain is on the extracellular side. A helical transmembrane segment spans residues 374-394 (FIHLLSYASACVNPLVYCFMH). Residues 395–447 (RRFRQACLETCARCCPRPPRARPRALPDEDPPTPSIASLSRLSYTTISTLGPG) are Cytoplasmic-facing. Residue Cys408 is the site of S-palmitoyl cysteine attachment.

This sequence belongs to the G-protein coupled receptor 1 family. In terms of tissue distribution, isoform 1 is expressed in brain, pancreas, stomach, the colon cancer cell line LoVo and the T-lymphoblastoma Jurkat, but not in heart, placenta, liver, lung, skeletal muscle, kidney or the stomach cancer cell line AGS. Expressed at high levels in the small cell lung cancer cell line NCI-H510, at lower levels in NCI-H345, NCI-H69 and GLC-28 cell lines, not expressed in GLC-19 cell line. Within the stomach, expressed at high levels in the mucosa of the gastric fundus and at low levels in the antrum and duodenum. Isoform 2 is present in pancreatic cancer cells and colorectal cancer cells, but not in normal pancreas or colonic mucosa. Isoform 3 is expressed in brain, pancreas, stomach, the stomach cancer cell line AGS and the colon cancer cell line LoVo.

It localises to the cell membrane. Its function is as follows. Receptor for gastrin and cholecystokinin. The CCK-B receptors occur throughout the central nervous system where they modulate anxiety, analgesia, arousal, and neuroleptic activity. This receptor mediates its action by association with G proteins that activate a phosphatidylinositol-calcium second messenger system. Isoform 2 is constitutively activated and may regulate cancer cell proliferation via a gastrin-independent mechanism. This Homo sapiens (Human) protein is Gastrin/cholecystokinin type B receptor.